The sequence spans 241 residues: ATP synthase subunit a (241 aa).

8 helical membrane passes run 29-49 (NSSL…LFGI), 54-74 (VIPG…ISII), 86-106 (IPLI…GVLP), 114-134 (HVIV…IVGF), 153-173 (WLAP…PVSL), 177-197 (LAAN…FIVN), 200-220 (IFFT…EVFV), and 221-241 (AILQ…DAVK).

Belongs to the ATPase A chain family. As to quaternary structure, F-type ATPases have 2 components, CF(1) - the catalytic core - and CF(0) - the membrane proton channel. CF(1) has five subunits: alpha(3), beta(3), gamma(1), delta(1), epsilon(1). CF(0) has three main subunits: a(1), b(2) and c(9-12). The alpha and beta chains form an alternating ring which encloses part of the gamma chain. CF(1) is attached to CF(0) by a central stalk formed by the gamma and epsilon chains, while a peripheral stalk is formed by the delta and b chains.

It is found in the cell inner membrane. Its function is as follows. Key component of the proton channel; it plays a direct role in the translocation of protons across the membrane. The chain is ATP synthase subunit a from Wolbachia sp. subsp. Drosophila simulans (strain wRi).